The sequence spans 349 residues: Ornithine carbamoyltransferase, mitochondrial (349 aa).

Carbamoyl phosphate is bound by residues 73–76, arginine 124, histidine 151, and glutamine 154; that span reads STRT. Residues asparagine 195, aspartate 261, serine 265, and methionine 266 each contribute to the L-ornithine site. Cysteine 303 (proton acceptor) is an active-site residue. Carbamoyl phosphate is bound by residues 303-304 and arginine 330; that span reads CL.

It belongs to the aspartate/ornithine carbamoyltransferase superfamily. OTCase family. In terms of assembly, homotrimer.

It is found in the mitochondrion matrix. It carries out the reaction carbamoyl phosphate + L-ornithine = L-citrulline + phosphate + H(+). Its pathway is amino-acid biosynthesis; L-arginine biosynthesis; L-arginine from L-ornithine and carbamoyl phosphate: step 1/3. In Coccidioides immitis (strain RS) (Valley fever fungus), this protein is Ornithine carbamoyltransferase, mitochondrial.